Here is a 154-residue protein sequence, read N- to C-terminus: uncharacterized protein (154 aa).

This is an uncharacterized protein from Saccharomyces cerevisiae (strain ATCC 204508 / S288c) (Baker's yeast).